Here is a 200-residue protein sequence, read N- to C-terminus: Probable molybdenum cofactor guanylyltransferase (200 aa).

GTP-binding positions include 9–11 (LAG), lysine 21, aspartate 69, and aspartate 100. Position 100 (aspartate 100) interacts with Mg(2+).

It belongs to the MobA family. The cofactor is Mg(2+).

The protein localises to the cytoplasm. It catalyses the reaction Mo-molybdopterin + GTP + H(+) = Mo-molybdopterin guanine dinucleotide + diphosphate. Transfers a GMP moiety from GTP to Mo-molybdopterin (Mo-MPT) cofactor (Moco or molybdenum cofactor) to form Mo-molybdopterin guanine dinucleotide (Mo-MGD) cofactor. The polypeptide is Probable molybdenum cofactor guanylyltransferase (Bacillus cereus (strain AH187)).